The primary structure comprises 467 residues: Squalene synthase (467 aa).

Belongs to the phytoene/squalene synthase family. Requires Mg(2+) as cofactor.

It carries out the reaction 2 (2E,6E)-farnesyl diphosphate + NADPH + H(+) = squalene + 2 diphosphate + NADP(+). The catalysed reaction is 2 (2E,6E)-farnesyl diphosphate + NADH + H(+) = squalene + 2 diphosphate + NAD(+). It functions in the pathway terpene metabolism; lanosterol biosynthesis; lanosterol from farnesyl diphosphate: step 1/3. Squalene synthase; part of the third module of ergosterol biosynthesis pathway that includes the late steps of the pathway. The third module or late pathway involves the ergosterol synthesis itself through consecutive reactions that mainly occur in the endoplasmic reticulum (ER) membrane. Firstly, the squalene synthase SQS catalyzes the condensation of 2 farnesyl pyrophosphate moieties to form squalene, which is the precursor of all steroids. Secondly, the squalene epoxidase catalyzes the stereospecific oxidation of squalene to (S)-2,3-epoxysqualene, which is considered to be a rate-limiting enzyme in steroid biosynthesis. Then, the lanosterol synthase LS catalyzes the cyclization of (S)-2,3 oxidosqualene to lanosterol, a reaction that forms the sterol core. In the next steps, lanosterol is transformed to ergosterol via a complex process involving various demethylation, reduction and desaturation reactions. Lanosterol is also an intermediate in the biosynthesis of triterpenes such as ganoderic acids (GA), a group of highly oxygenated lanostane-type triterpenoids which are well recognized as a main group of unique bioactive compounds in the medicinal mushroom Ganoderma lucidum. This chain is Squalene synthase, found in Ganoderma lucidum (Ling zhi medicinal fungus).